Reading from the N-terminus, the 505-residue chain is ATP synthase subunit alpha (505 aa).

G172–T179 provides a ligand contact to ATP.

It belongs to the ATPase alpha/beta chains family. F-type ATPases have 2 components, CF(1) - the catalytic core - and CF(0) - the membrane proton channel. CF(1) has five subunits: alpha(3), beta(3), gamma(1), delta(1), epsilon(1). CF(0) has three main subunits: a(1), b(2) and c(9-12). The alpha and beta chains form an alternating ring which encloses part of the gamma chain. CF(1) is attached to CF(0) by a central stalk formed by the gamma and epsilon chains, while a peripheral stalk is formed by the delta and b chains.

The protein localises to the cell inner membrane. The enzyme catalyses ATP + H2O + 4 H(+)(in) = ADP + phosphate + 5 H(+)(out). Produces ATP from ADP in the presence of a proton gradient across the membrane. The alpha chain is a regulatory subunit. The sequence is that of ATP synthase subunit alpha from Syntrophobacter fumaroxidans (strain DSM 10017 / MPOB).